We begin with the raw amino-acid sequence, 115 residues long: uncharacterized protein (115 aa).

The N-terminal stretch at 1–24 is a signal peptide; sequence MLPLCLTFLSFFLSLGGSFKAVMT. Helical transmembrane passes span 39–59 and 93–113; these read FWIFNWTVTLIPLNSLVALAI and YLTSLGSNFGGIFVYPLFLLS.

It localises to the membrane. This is an uncharacterized protein from Saccharomyces cerevisiae (strain ATCC 204508 / S288c) (Baker's yeast).